The primary structure comprises 290 residues: Ribosomal RNA small subunit methyltransferase A (290 aa).

S-adenosyl-L-methionine is bound by residues Asn-27, Leu-29, Gly-54, Glu-75, Asp-100, and Asn-125.

It belongs to the class I-like SAM-binding methyltransferase superfamily. rRNA adenine N(6)-methyltransferase family. RsmA subfamily.

It is found in the cytoplasm. It catalyses the reaction adenosine(1518)/adenosine(1519) in 16S rRNA + 4 S-adenosyl-L-methionine = N(6)-dimethyladenosine(1518)/N(6)-dimethyladenosine(1519) in 16S rRNA + 4 S-adenosyl-L-homocysteine + 4 H(+). Its function is as follows. Specifically dimethylates two adjacent adenosines (A1518 and A1519) in the loop of a conserved hairpin near the 3'-end of 16S rRNA in the 30S particle. May play a critical role in biogenesis of 30S subunits. This Streptococcus pneumoniae (strain ATCC BAA-255 / R6) protein is Ribosomal RNA small subunit methyltransferase A.